The primary structure comprises 152 residues: Deoxyuridine 5'-triphosphate nucleotidohydrolase (152 aa).

Residues 71-73 (RSG), Asn84, 88-90 (LID), and Met98 contribute to the substrate site.

Belongs to the dUTPase family. It depends on Mg(2+) as a cofactor.

It catalyses the reaction dUTP + H2O = dUMP + diphosphate + H(+). The protein operates within pyrimidine metabolism; dUMP biosynthesis; dUMP from dCTP (dUTP route): step 2/2. Functionally, this enzyme is involved in nucleotide metabolism: it produces dUMP, the immediate precursor of thymidine nucleotides and it decreases the intracellular concentration of dUTP so that uracil cannot be incorporated into DNA. This chain is Deoxyuridine 5'-triphosphate nucleotidohydrolase, found in Cronobacter sakazakii (strain ATCC BAA-894) (Enterobacter sakazakii).